The chain runs to 320 residues: Porphobilinogen deaminase (320 aa).

Position 251 is an S-(dipyrrolylmethanemethyl)cysteine (Cys-251).

Belongs to the HMBS family. As to quaternary structure, monomer. It depends on dipyrromethane as a cofactor.

The catalysed reaction is 4 porphobilinogen + H2O = hydroxymethylbilane + 4 NH4(+). It participates in porphyrin-containing compound metabolism; protoporphyrin-IX biosynthesis; coproporphyrinogen-III from 5-aminolevulinate: step 2/4. Functionally, tetrapolymerization of the monopyrrole PBG into the hydroxymethylbilane pre-uroporphyrinogen in several discrete steps. The protein is Porphobilinogen deaminase of Phenylobacterium zucineum (strain HLK1).